The following is a 124-amino-acid chain: Probable S-adenosyl-L-methionine-binding protein VNG_1115H (124 aa).

The TsaA-like domain occupies 3 to 124 (ATPIGYADTR…PVLDLKPALD (122 aa)). Residues 20-22 (PRQ), 58-59 (DD), Arg-78, and 111-114 (AHGS) each bind S-adenosyl-L-methionine.

It belongs to the tRNA methyltransferase O family.

The chain is Probable S-adenosyl-L-methionine-binding protein VNG_1115H from Halobacterium salinarum (strain ATCC 700922 / JCM 11081 / NRC-1) (Halobacterium halobium).